The chain runs to 344 residues: tRNA N6-adenosine threonylcarbamoyltransferase (344 aa).

2 residues coordinate Fe cation: His-110 and His-114. Residues 133–137 (VVSGA), Asp-166, Gly-179, and Asn-278 contribute to the substrate site. Residue Asp-303 participates in Fe cation binding.

Belongs to the KAE1 / TsaD family. Requires Fe(2+) as cofactor.

It is found in the cytoplasm. It carries out the reaction L-threonylcarbamoyladenylate + adenosine(37) in tRNA = N(6)-L-threonylcarbamoyladenosine(37) in tRNA + AMP + H(+). Required for the formation of a threonylcarbamoyl group on adenosine at position 37 (t(6)A37) in tRNAs that read codons beginning with adenine. Is involved in the transfer of the threonylcarbamoyl moiety of threonylcarbamoyl-AMP (TC-AMP) to the N6 group of A37, together with TsaE and TsaB. TsaD likely plays a direct catalytic role in this reaction. This is tRNA N6-adenosine threonylcarbamoyltransferase from Chlamydia abortus (strain DSM 27085 / S26/3) (Chlamydophila abortus).